Reading from the N-terminus, the 474-residue chain is 3-isopropylmalate dehydratase large subunit (474 aa).

3 residues coordinate [4Fe-4S] cluster: C352, C413, and C416.

Belongs to the aconitase/IPM isomerase family. LeuC type 1 subfamily. As to quaternary structure, heterodimer of LeuC and LeuD. Requires [4Fe-4S] cluster as cofactor.

It carries out the reaction (2R,3S)-3-isopropylmalate = (2S)-2-isopropylmalate. It participates in amino-acid biosynthesis; L-leucine biosynthesis; L-leucine from 3-methyl-2-oxobutanoate: step 2/4. In terms of biological role, catalyzes the isomerization between 2-isopropylmalate and 3-isopropylmalate, via the formation of 2-isopropylmaleate. This Pseudomonas syringae pv. syringae (strain B728a) protein is 3-isopropylmalate dehydratase large subunit.